We begin with the raw amino-acid sequence, 498 residues long: ATP synthase subunit beta, chloroplastic (498 aa).

172-179 is a binding site for ATP; that stretch reads GGAGVGKT.

The protein belongs to the ATPase alpha/beta chains family. As to quaternary structure, F-type ATPases have 2 components, CF(1) - the catalytic core - and CF(0) - the membrane proton channel. CF(1) has five subunits: alpha(3), beta(3), gamma(1), delta(1), epsilon(1). CF(0) has four main subunits: a(1), b(1), b'(1) and c(9-12).

It localises to the plastid. The protein resides in the chloroplast thylakoid membrane. It catalyses the reaction ATP + H2O + 4 H(+)(in) = ADP + phosphate + 5 H(+)(out). In terms of biological role, produces ATP from ADP in the presence of a proton gradient across the membrane. The catalytic sites are hosted primarily by the beta subunits. This is ATP synthase subunit beta, chloroplastic from Daucus carota (Wild carrot).